The primary structure comprises 134 residues: Z-ring associated protein G (134 aa).

Residues 7 to 27 (EIWVAIGIAFIVGLFIGYIIV) form a helical membrane-spanning segment. Residues 107 to 134 (ATDKSQNEQPRDYSEGASGLFKENKEEN) are disordered. A compositionally biased stretch (basic and acidic residues) spans 111–120 (SQNEQPRDYS).

It belongs to the ZapG family.

The protein resides in the cell inner membrane. Functionally, involved in cell division, cell envelope biogenesis and cell shape maintenance. This Haemophilus influenzae (strain ATCC 51907 / DSM 11121 / KW20 / Rd) protein is Z-ring associated protein G.